We begin with the raw amino-acid sequence, 501 residues long: Aldehyde dehydrogenase 1A1 (501 aa).

Ser-2 is modified (N-acetylserine). N6-acetyllysine is present on residues Lys-91 and Lys-128. NAD(+) contacts are provided by residues 167–170 (IPWN), 193–196 (KPAE), 226–227 (GP), and 246–247 (GS). Lys-252 is subject to N6-acetyllysine. Glu-269 (proton acceptor) is an active-site residue. Position 269-271 (269-271 (ELG)) interacts with NAD(+). Cys-303 acts as the Nucleophile in catalysis. Residues 336-501 (LTPGATQGPQ…VTVKISQKNS (166 aa)) are mediates interaction with PRMT3. The residue at position 337 (Thr-337) is a Phosphothreonine. Residue 349-353 (EQYDK) coordinates NAD(+). 2 positions are modified to N6-acetyllysine: Lys-353 and Lys-367. 400–402 (EIF) is a binding site for NAD(+). At Lys-410 the chain carries N6-acetyllysine. At Ser-413 the chain carries Phosphoserine. 2 positions are modified to N6-acetyllysine: Lys-419 and Lys-495.

The protein belongs to the aldehyde dehydrogenase family. As to quaternary structure, homotetramer. Interacts with PRMT3; the interaction is direct, inhibits ALDH1A1 aldehyde dehydrogenase activity and is independent of the methyltransferase activity of PRMT3. In terms of processing, the N-terminus is blocked most probably by acetylation.

It localises to the cytoplasm. Its subcellular location is the cytosol. The protein resides in the cell projection. It is found in the axon. It carries out the reaction an aldehyde + NAD(+) + H2O = a carboxylate + NADH + 2 H(+). It catalyses the reaction all-trans-retinal + NAD(+) + H2O = all-trans-retinoate + NADH + 2 H(+). The catalysed reaction is 9-cis-retinal + NAD(+) + H2O = 9-cis-retinoate + NADH + 2 H(+). The enzyme catalyses 11-cis-retinal + NAD(+) + H2O = 11-cis-retinoate + NADH + 2 H(+). It carries out the reaction 13-cis-retinal + NAD(+) + H2O = 13-cis-retinoate + NADH + 2 H(+). It catalyses the reaction 3-deoxyglucosone + NAD(+) + H2O = 2-dehydro-3-deoxy-D-gluconate + NADH + 2 H(+). The catalysed reaction is (E)-4-hydroxynon-2-enal + NAD(+) + H2O = (E)-4-hydroxynon-2-enoate + NADH + 2 H(+). The enzyme catalyses malonaldehyde + NAD(+) + H2O = 3-oxopropanoate + NADH + 2 H(+). It carries out the reaction hexanal + NAD(+) + H2O = hexanoate + NADH + 2 H(+). It catalyses the reaction propanal + NAD(+) + H2O = propanoate + NADH + 2 H(+). The catalysed reaction is acetaldehyde + NAD(+) + H2O = acetate + NADH + 2 H(+). The enzyme catalyses benzaldehyde + NAD(+) + H2O = benzoate + NADH + 2 H(+). It carries out the reaction 4-aminobutanal + NAD(+) + H2O = 4-aminobutanoate + NADH + 2 H(+). It participates in cofactor metabolism; retinol metabolism. Functionally, cytosolic dehydrogenase that catalyzes the irreversible oxidation of a wide range of aldehydes to their corresponding carboxylic acid. Functions downstream of retinol dehydrogenases and catalyzes the oxidation of retinaldehyde into retinoic acid, the second step in the oxidation of retinol/vitamin A into retinoic acid. This pathway is crucial to control the levels of retinol and retinoic acid, two important molecules which excess can be teratogenic and cytotoxic. Also oxidizes aldehydes resulting from lipid peroxidation like (E)-4-hydroxynon-2-enal/HNE, malonaldehyde and hexanal that form protein adducts and are highly cytotoxic. By participating for instance to the clearance of (E)-4-hydroxynon-2-enal/HNE in the lens epithelium prevents the formation of HNE-protein adducts and lens opacification. Also functions downstream of fructosamine-3-kinase in the fructosamine degradation pathway by catalyzing the oxidation of 3-deoxyglucosone, the carbohydrate product of fructosamine 3-phosphate decomposition, which is itself a potent glycating agent that may react with lysine and arginine side-chains of proteins. Also has an aminobutyraldehyde dehydrogenase activity and is probably part of an alternative pathway for the biosynthesis of GABA/4-aminobutanoate in midbrain, thereby playing a role in GABAergic synaptic transmission. This chain is Aldehyde dehydrogenase 1A1, found in Macaca fascicularis (Crab-eating macaque).